A 592-amino-acid polypeptide reads, in one-letter code: Neurogenic locus notch homolog protein (592 aa).

A signal peptide spans 1-19 (MIFVLTLVALCTAIHCPDG). 6 EGF-like domains span residues 64-104 (YPSI…DYQV), 106-146 (VPEA…EKCT), 267-307 (YPEA…NTCI), 353-387 (NSQT…PTCE), 453-488 (VPNS…ALCE), and 546-588 (IDGE…KHCN). 15 disulfide bridges follow: Cys-68/Cys-82, Cys-76/Cys-92, Cys-110/Cys-123, Cys-117/Cys-134, Cys-136/Cys-145, Cys-271/Cys-284, Cys-278/Cys-293, Cys-295/Cys-306, Cys-362/Cys-375, Cys-377/Cys-386, Cys-457/Cys-471, Cys-478/Cys-487, Cys-550/Cys-565, Cys-555/Cys-576, and Cys-578/Cys-587. Asn-552 carries N-linked (GlcNAc...) asparagine glycosylation.

Belongs to the NOTCH family. In terms of assembly, interacts with EB1.

The protein localises to the cell projection. The protein resides in the cilium. Its subcellular location is the flagellum. It localises to the cytoplasm. It is found in the cytoskeleton. The protein localises to the flagellum axoneme. The polypeptide is Neurogenic locus notch homolog protein (Giardia intestinalis (strain ATCC 50803 / WB clone C6) (Giardia lamblia)).